A 1087-amino-acid polypeptide reads, in one-letter code: Formin-H (1087 aa).

Residues 1-23 (MSFDLESNSSGGSTIGRNSSIRL) are compositionally biased toward polar residues. A disordered region spans residues 1–25 (MSFDLESNSSGGSTIGRNSSIRLSS). In terms of domain architecture, GBD/FH3 spans 34–394 (VSLNEIIDLD…QLEDELKIHP (361 aa)). Low complexity-rich tracts occupy residues 416–436 (FGFG…SMAK) and 549–558 (SPGSTLSPSP). Disordered stretches follow at residues 416–445 (FGFG…DNEE), 549–625 (SPGS…PAKP), and 1048–1087 (VDSL…QLKK). Residues 433–461 (SMAKTELKKDNEEKQKTIEHLLKQLNKFS) are a coiled coil. Over residues 569–588 (FGITSSSIHTSTDKLTNSTE) the composition is skewed to polar residues. An FH1 domain is found at 589–615 (PILGSPPPPPPPPMSGGGGPPPPPPPP). Residues 592-616 (GSPPPPPPPPMSGGGGPPPPPPPPG) show a composition bias toward pro residues. An FH2 domain is found at 623–1016 (AKPIIKPSVK…ENSKMEDPEK (394 aa)). One can recognise a DAD domain in the interval 1013-1051 (DPEKGGLQDLSSQIRSGQLFKDRRVGDSVIAQMQNVDSL).

This sequence belongs to the formin homology family. Diaphanous subfamily. In terms of assembly, interacts with vasP, proB/profilin-2 and rac1A. Interacts (via GBD/FH3 domain) with activated Rho-GTPases.

The protein localises to the cytoplasm. The protein resides in the cell cortex. It localises to the cytoskeleton. Its function is as follows. Formins play an important role in the nucleation of actin and the formation of linear actin filaments. Important for cell migration and formation, elongation and maintenance of filopodia. Specifically controls filopodial dynamics by regulating actin turnover at the barbed ends of actin filaments. This Dictyostelium discoideum (Social amoeba) protein is Formin-H (forH).